The primary structure comprises 496 residues: Versicolorin B desaturase stcL (496 aa).

A helical transmembrane segment spans residues 3 to 23 (FLSLPILTALGAVVYVLFQLV). Position 440 (C440) interacts with heme.

It belongs to the cytochrome P450 family. Heme is required as a cofactor.

It localises to the membrane. It catalyses the reaction versicolorin B + NADPH + O2 + H(+) = versicolorin A + NADP(+) + 2 H2O. It functions in the pathway mycotoxin biosynthesis; sterigmatocystin biosynthesis. Its function is as follows. Cytochrome P450 monooxygenase; part of the gene cluster that mediates the biosynthesis of sterigmatocystin (ST), a polyketide-derived furanocoumarin which is part of the most toxic and carcinogenic compounds among the known mycotoxins. The first step in the biosynthesis of sterigmatocystin is the production of hexanoate by the fatty acid synthase (FAS) units stcJ and stcK. The polyketide backbone is assembled by the non-reducing polyketide synthase stcA by condensation of the starter hexanoyl-CoA and 7 malonyl-CoA extender units followed by cyclization and release of norsolorinic acid. Norsolorinic acid is the first stable intermediate in the biosynthesis of sterigmatocystin and is converted into averantin (AVN) by the ketoreductase stcE which reduces the hexanoate ketone to an alcohol. Averantin is then oxidized into 5'-hydroxyaverantin (HAVN) by the cytochrome P450 monooxygenase stcF. 5'-hydroxyaverantin is further converted to 5'-oxyaverantin (OAVN) by the 5'-hydroxyaverantin dehydrogenase stcG. The next step is the conversion of OAVN into averufin (AVF) which is catalyzed by a yet to be identified enzyme. The cytochrome P450 monooxygenase stcB and the flavin-binding monooxygenase stcW are both required for the conversion of averufin to 1-hydroxyversicolorone. The esterase stcI probably catalyzes the formation of versiconal hemiacetal acetate from 1-hydroxyversicolorone. The oxydoreductase stcN then probably catalyzes the biosynthetic step from versiconal to versicolorin B (VERB). The next step is performed by the versicolorin B desaturase stcL to produce versicolorin A (VERA). The ketoreductase stcU and the cytochrome P450 monooxygenase stcS are involved in the conversion of versicolorin A to demethylsterigmatocystin. The Baeyer-Villiger oxidas stcQ and the reductase stcR might be involved in the biosynthetic step from versicolorin A to demethylsterigmatocystin. The final step in the biosynthesis of sterigmatocystin is the methylation of demethylsterigmatocystin catalyzed by the methyltransferase stcP. The sequence is that of Versicolorin B desaturase stcL from Emericella nidulans (strain FGSC A4 / ATCC 38163 / CBS 112.46 / NRRL 194 / M139) (Aspergillus nidulans).